A 458-amino-acid polypeptide reads, in one-letter code: Transcription factor PCF5 (458 aa).

Disordered stretches follow at residues 1–103 (MGDA…RGPR), 159–182 (GAGA…ENSD), 278–299 (MFHH…TTQQ), and 424–458 (RLPA…ASHH). Gly residues predominate over residues 65–74 (RGGGGGGGGE). The TCP domain occupies 89-147 (RKDRHSKVCTARGPRDRRVRLSAHTAIQFYDVQDRLGYDRPSKAVDWLIKNAKDAIDKL).

Forms homodimers and heterodimers.

It localises to the nucleus. Functionally, transcription activator. Binds the promoter core sequence 5'-GGNCC-3'. This is Transcription factor PCF5 (PCF5) from Oryza sativa subsp. japonica (Rice).